We begin with the raw amino-acid sequence, 698 residues long: Cytochrome c oxidase subunit 1 (698 aa).

Residues 65-85 traverse the membrane as a helical segment; it reads INYLYFSMVTGLSGAALATMI. Glutamate 88 serves as a coordination point for Ca(2+). Histidine 111 is a Fe(II)-heme a binding site. 8 consecutive transmembrane segments (helical) span residues 113–133, 147–167, 304–324, 349–369, 395–415, 434–454, 468–488, and 498–518; these read LIMV…NFLI, LNSI…KIGF, ILIL…TNLL, IFLT…AVIM, LFWF…FGFI, IWAI…HMYL, ITIM…LSLV, and FLFS…GMWL. Cu cation is bound at residue histidine 401. Positions 401-405 form a cross-link, 1'-histidyl-3'-tyrosine (His-Tyr); sequence HPEVY. Tyrosine 405 serves as a coordination point for O2. Residues histidine 450 and histidine 451 each contribute to the Cu cation site. 2 residues coordinate Mg(2+): histidine 528 and aspartate 529. 3 helical membrane passes run 533–553, 574–594, and 613–633; these read VVAH…FSGF, LIYY…LGFS, and MSTA…LMIF. Residue histidine 536 coordinates heme a3. Fe(II)-heme a is bound at residue histidine 538.

This sequence belongs to the heme-copper respiratory oxidase family. Component of the cytochrome c oxidase (complex IV, CIV), a multisubunit enzyme composed of a catalytic core of 3 subunits and several supernumerary subunits. The complex exists as a monomer or a dimer and forms supercomplexes (SCs) in the inner mitochondrial membrane with ubiquinol-cytochrome c oxidoreductase (cytochrome b-c1 complex, complex III, CIII). It depends on heme as a cofactor. Cu cation is required as a cofactor.

It is found in the mitochondrion inner membrane. The enzyme catalyses 4 Fe(II)-[cytochrome c] + O2 + 8 H(+)(in) = 4 Fe(III)-[cytochrome c] + 2 H2O + 4 H(+)(out). It functions in the pathway energy metabolism; oxidative phosphorylation. Functionally, component of the cytochrome c oxidase, the last enzyme in the mitochondrial electron transport chain which drives oxidative phosphorylation. The respiratory chain contains 3 multisubunit complexes succinate dehydrogenase (complex II, CII), ubiquinol-cytochrome c oxidoreductase (cytochrome b-c1 complex, complex III, CIII) and cytochrome c oxidase (complex IV, CIV), that cooperate to transfer electrons derived from NADH and succinate to molecular oxygen, creating an electrochemical gradient over the inner membrane that drives transmembrane transport and the ATP synthase. Cytochrome c oxidase is the component of the respiratory chain that catalyzes the reduction of oxygen to water. Electrons originating from reduced cytochrome c in the intermembrane space (IMS) are transferred via the dinuclear copper A center (CU(A)) of subunit 2 and heme A of subunit 1 to the active site in subunit 1, a binuclear center (BNC) formed by heme A3 and copper B (CU(B)). The BNC reduces molecular oxygen to 2 water molecules using 4 electrons from cytochrome c in the IMS and 4 protons from the mitochondrial matrix. The polypeptide is Cytochrome c oxidase subunit 1 (COI) (Tetrahymena pyriformis).